The primary structure comprises 2273 residues: Retinal-specific phospholipid-transporting ATPase ABCA4 (2273 aa).

At 1 to 21 the chain is on the cytoplasmic side; it reads MGFVRQIQLLLWKNWTLRKRQ. The helical transmembrane segment at 22–42 threads the bilayer; sequence KIRFVVELVWPLSLFLVLIWL. Topologically, residues 43–646 are extracellular; that stretch reads RNANPLYSHH…MPYPCFVDDS (604 aa). Disulfide bonds link C54-C81 and C75-C324. N-linked (GlcNAc...) asparagine glycosylation occurs at N98. S336 and N338 together coordinate Mg(2+). C370 and C519 are joined by a disulfide. N-linked (GlcNAc...) asparagine glycosylation is found at N415, N444, and N504. Positions 587 and 653 each coordinate an N-all-trans-retinylidenephosphatidylethanolamine. Intrachain disulfides connect C641–C1490, C1444–C1455, and C1488–C1502. Residues 647–667 traverse the membrane as a helical segment; that stretch reads FMIILNRCFPIFMVLAWIYSV. Residues 668–699 lie on the Cytoplasmic side of the membrane; it reads SMTVKSIVLEKELRLKETLKNQGVSNAVIWCT. The chain crosses the membrane as a helical span at residues 700-720; sequence WFLDSFSIMSMSIFLLTIFIM. Over 721-730 the chain is Extracellular; sequence HGRILHYSDP. The chain crosses the membrane as a helical span at residues 731-751; the sequence is FILFLFLLAFSTATIMLCFLL. Residues 752 to 759 lie on the Cytoplasmic side of the membrane; it reads STFFSKAS. The helical transmembrane segment at 760 to 780 threads the bilayer; that stretch reads LAAACSGVIYFTLYLPHILCF. Residues 781 to 835 lie on the Extracellular side of the membrane; that stretch reads AWQDRMTAELKKAVSLLSPVAFGFGTEYLVRFEEQGLGLQWSNIGNSPTEGDEFS. Residues 836–856 traverse the membrane as a helical segment; sequence FLLSMQMMLLDAAVYGLLAWY. Topologically, residues 857-1376 are cytoplasmic; the sequence is LDQVFPGDYG…IRSHKDFLAQ (520 aa). The tract at residues 891-911 is disordered; sequence ERALEKTEPLTEETEDPEHPE. A Phosphothreonine modification is found at T901. In terms of domain architecture, ABC transporter 1 spans 929-1160; the sequence is VCVKNLVKIF…FGTGLYLTLV (232 aa). 3 residues coordinate ATP: F938, G966, and K969. T970 contributes to the Mg(2+) binding site. 6 residues coordinate ATP: T971, Q1010, K1054, G1064, G1065, and H1118. S1185 is modified (phosphoserine). Residues 1284–1345 are disordered; sequence PLFAGGAQQK…EPECPGPQLN (62 aa). Position 1313 is a phosphothreonine (T1313). S1317 carries the phosphoserine modification. The span at 1331–1340 shows a compositional bias: pro residues; sequence GQPPPEPECP. A helical membrane pass occupies residues 1377–1397; sequence IVLPATFVFLALMLSIVIPPF. The Extracellular segment spans residues 1398–1727; it reads GEYPALTLHP…VSPTTYWVTN (330 aa). N1469 carries N-linked (GlcNAc...) asparagine glycosylation. N1529, N1588, and N1662 each carry an N-linked (GlcNAc...) asparagine glycan. Residues 1728–1748 form a helical membrane-spanning segment; the sequence is FLWDIMNYSVSAGLVVGIFIG. Over 1749-1759 the chain is Cytoplasmic; it reads FQKKAYTSPEN. A helical membrane pass occupies residues 1760–1780; sequence LPALVALLLLYGWAVIPMMYP. The Extracellular segment spans residues 1781–1792; it reads ASFLFDVPSTAY. The helical transmembrane segment at 1793–1813 threads the bilayer; that stretch reads VALSCANLFIGINSSAITFIL. Residues 1814 to 1831 are Cytoplasmic-facing; that stretch reads ELFENNRTLLRFNAVLRK. A helical membrane pass occupies residues 1832 to 1852; sequence LLIVFPHFCLGRGLIDLALSQ. The Extracellular segment spans residues 1853 to 1873; that stretch reads AVTDVYARFGEEHSANPFHWD. The helical transmembrane segment at 1874–1894 threads the bilayer; sequence LIGKNLFAMVVEGVVYFLLTL. Topologically, residues 1895–2273 are cytoplasmic; sequence LVQRHFFLSQ…AAGASRQAQD (379 aa). Residues 1938-2170 enclose the ABC transporter 2 domain; it reads LRLHELTKIY…FGDGYIVTMK (233 aa). Residues N1974, G1975, K1978, T1979, T1980, and G2073 each contribute to the ATP site. T1979 is a binding site for Mg(2+). The tract at residues 2244–2249 is essential for ATP binding and ATPase activity; that stretch reads VFVNFA.

Belongs to the ABC transporter superfamily. ABCA family. Post-translationally, proteolytic cleavage by trypsin leads to a 120-kDa N-terminal fragment and a 115-kDa C-terminal fragment that are linked through disulfide bonds. N-glycosylated. In terms of processing, phosphorylation is independent of light exposure and modulates ATPase activity. Retinal-specific. Seems to be exclusively found in the rims of rod photoreceptor cells.

It localises to the membrane. Its subcellular location is the endoplasmic reticulum. The protein localises to the cytoplasmic vesicle. The protein resides in the cell projection. It is found in the cilium. It localises to the photoreceptor outer segment. The catalysed reaction is an N-all-trans-retinylidenephosphatidylethanolamine(out) + ATP + H2O = an N-all-trans-retinylidenephosphatidylethanolamine(in) + ADP + phosphate + H(+). It catalyses the reaction ATP + H2O + phospholipidSide 1 = ADP + phosphate + phospholipidSide 2.. It carries out the reaction a 1,2-diacyl-sn-glycero-3-phosphoethanolamine(out) + ATP + H2O = a 1,2-diacyl-sn-glycero-3-phosphoethanolamine(in) + ADP + phosphate + H(+). The enzyme catalyses N-11-cis-retinylidenephosphatidylethanolamine(out) + ATP + H2O = N-11-cis-retinylidenephosphatidylethanolamine(in) + ADP + phosphate + H(+). The catalysed reaction is ATP + H2O = ADP + phosphate + H(+). With respect to regulation, ATPase activity is decreased by cholesterol and ceramide. Phospholipids translocase activity is highly reduced by berylium fluoride and aluminum floride. N-ethylmaleimide inhibits phospholipid translocase activity. Flippase that catalyzes in an ATP-dependent manner the transport of retinal-phosphatidylethanolamine conjugates like 11-cis and all-trans isomers of N-retinylidene-phosphatidylethanolamine (N-Ret-PE) from the lumen to the cytoplasmic leaflet of photoreceptor outer segment disk membranes, where 11-cis-retinylidene-phosphatidylethanolamine is then isomerized to its all-trans isomer and reduced by RDH8 to produce all-trans-retinol. This transport activity ensures that all-trans-retinal generated from photoexcitation and 11-cis-retinal not needed for the regeneration of rhodopsin and cone opsins are effectively cleared from the photoreceptors, therefore preventing their accumulation and the formation of toxic bisretinoid. Displays ATPase activity in vitro in absence of retinal substrate. May display GTPase activity that is strongly influenced by the lipid environment and the presence of retinoid compounds. Binds the unprotonated form of N-retinylidene-phosphatidylethanolamine with high affinity in the absence of ATP, and ATP binding and hydrolysis induce a protein conformational change that causes N-retinylidene-phosphatidylethanolamine release. In Homo sapiens (Human), this protein is Retinal-specific phospholipid-transporting ATPase ABCA4.